The sequence spans 429 residues: Keratin, type I cytoskeletal 47 kDa (429 aa).

A compositionally biased stretch (low complexity) spans 1 to 16; it reads MTSYRSSSASYYSGSS. The interval 1-20 is disordered; sequence MTSYRSSSASYYSGSSSKGG. Positions 1-69 are head; the sequence is MTSYRSSSAS…EAASSSFGGN (69 aa). The tract at residues 70-105 is coil 1A; it reads EKHAMQNLNDRLASYLEKVRALEATNSDLEGKIRNW. The region spanning 70 to 385 is the IF rod domain; it reads EKHAMQNLND…RLLEGELGQV (316 aa). The interval 106 to 127 is linker 1; the sequence is YDKQSDAGIGAGSKDYSKYFEI. Positions 128 to 219 are coil 1B; sequence IAELRNKIRA…KNHEEEMSHA (92 aa). Positions 220-242 are linker 12; the sequence is KSQSAGKVSVEMDAALGVDLTSI. The coil 2 stretch occupies residues 243 to 381; it reads LNNMRADYEI…QTYRRLLEGE (139 aa). The interval 382-429 is tail; the sequence is LGQVTTVANTSSVESKTESSSTSTTRTRMVKTIVEEVVDGKVVSSRVE. The tract at residues 389 to 408 is disordered; the sequence is ANTSSVESKTESSSTSTTRT. Positions 391 to 408 are enriched in low complexity; the sequence is TSSVESKTESSSTSTTRT.

Belongs to the intermediate filament family. In terms of assembly, heterotetramer of two type I and two type II keratins.

The chain is Keratin, type I cytoskeletal 47 kDa (xk81a1) from Xenopus laevis (African clawed frog).